Reading from the N-terminus, the 212-residue chain is Adenylate kinase (212 aa).

10–15 (GAGKGT) contacts ATP. An NMP region spans residues 30 to 59 (STGDILREAMAQETELGQKAKSYIDAGELV). Residues Thr-31, Arg-36, 57-59 (ELV), 84-87 (GYPR), and Gln-91 each bind AMP. Residues 125-158 (RRRVHEETGETYHLDHDPPPEDVDPDLIVQRSDD) are LID. ATP contacts are provided by residues Arg-126 and 135 to 136 (TY). AMP is bound by residues Arg-155 and Arg-166. Residue Gly-194 participates in ATP binding.

Belongs to the adenylate kinase family. As to quaternary structure, monomer.

The protein resides in the cytoplasm. The catalysed reaction is AMP + ATP = 2 ADP. The protein operates within purine metabolism; AMP biosynthesis via salvage pathway; AMP from ADP: step 1/1. Functionally, catalyzes the reversible transfer of the terminal phosphate group between ATP and AMP. Plays an important role in cellular energy homeostasis and in adenine nucleotide metabolism. This chain is Adenylate kinase, found in Salinibacter ruber (strain DSM 13855 / M31).